Reading from the N-terminus, the 221-residue chain is Protein GrpE (221 aa).

The segment at 1–43 (MFTNPFGRKKDMSDDQKKNNQPDTEADNAENIKFAADDTELRA) is disordered. Over residues 8–20 (RKKDMSDDQKKNN) the composition is skewed to basic and acidic residues.

It belongs to the GrpE family. In terms of assembly, homodimer.

Its subcellular location is the cytoplasm. Participates actively in the response to hyperosmotic and heat shock by preventing the aggregation of stress-denatured proteins, in association with DnaK and GrpE. It is the nucleotide exchange factor for DnaK and may function as a thermosensor. Unfolded proteins bind initially to DnaJ; upon interaction with the DnaJ-bound protein, DnaK hydrolyzes its bound ATP, resulting in the formation of a stable complex. GrpE releases ADP from DnaK; ATP binding to DnaK triggers the release of the substrate protein, thus completing the reaction cycle. Several rounds of ATP-dependent interactions between DnaJ, DnaK and GrpE are required for fully efficient folding. In Deinococcus radiodurans (strain ATCC 13939 / DSM 20539 / JCM 16871 / CCUG 27074 / LMG 4051 / NBRC 15346 / NCIMB 9279 / VKM B-1422 / R1), this protein is Protein GrpE.